We begin with the raw amino-acid sequence, 318 residues long: Glutathione synthetase (318 aa).

Positions 124–310 (EKLFTAWFPE…ITGKLMDAIE (187 aa)) constitute an ATP-grasp domain. Position 150–207 (150–207 (FREQHGDVILKPLDGMGGASIFRVKEGDPNLSVIIETLTNHGQNYCMAQTFVPDISNG)) interacts with ATP. The Mg(2+) site is built by glutamate 281 and asparagine 283.

Belongs to the prokaryotic GSH synthase family. It depends on Mg(2+) as a cofactor. Mn(2+) is required as a cofactor.

It carries out the reaction gamma-L-glutamyl-L-cysteine + glycine + ATP = glutathione + ADP + phosphate + H(+). Its pathway is sulfur metabolism; glutathione biosynthesis; glutathione from L-cysteine and L-glutamate: step 2/2. The protein is Glutathione synthetase of Vibrio cholerae serotype O1 (strain ATCC 39315 / El Tor Inaba N16961).